The sequence spans 357 residues: Protein-glutamate methylesterase/protein-glutamine glutaminase 1 (357 aa).

Residues 7-125 (RAVIIDDSLL…QFDPEEIGNI (119 aa)) enclose the Response regulatory domain. D58 carries the 4-aspartylphosphate modification. Residues 162–344 (KKSPIQAICI…VEYIEPVTEI (183 aa)) enclose the CheB-type methylesterase domain. Catalysis depends on residues S174, H201, and D297.

This sequence belongs to the CheB family. In terms of processing, phosphorylated by CheA. Phosphorylation of the N-terminal regulatory domain activates the methylesterase activity.

The protein localises to the cytoplasm. It carries out the reaction [protein]-L-glutamate 5-O-methyl ester + H2O = L-glutamyl-[protein] + methanol + H(+). The enzyme catalyses L-glutaminyl-[protein] + H2O = L-glutamyl-[protein] + NH4(+). Its function is as follows. Involved in chemotaxis. Part of a chemotaxis signal transduction system that modulates chemotaxis in response to various stimuli. Catalyzes the demethylation of specific methylglutamate residues introduced into the chemoreceptors (methyl-accepting chemotaxis proteins or MCP) by CheR. Also mediates the irreversible deamidation of specific glutamine residues to glutamic acid. In Leptospira interrogans serogroup Icterohaemorrhagiae serovar Lai (strain 56601), this protein is Protein-glutamate methylesterase/protein-glutamine glutaminase 1.